A 224-amino-acid polypeptide reads, in one-letter code: Putative ribonuclease Z (224 aa).

Positions 120 and 184 each coordinate Zn(2+).

Belongs to the RNase Z family. Homodimer. Zn(2+) is required as a cofactor.

The enzyme catalyses Endonucleolytic cleavage of RNA, removing extra 3' nucleotides from tRNA precursor, generating 3' termini of tRNAs. A 3'-hydroxy group is left at the tRNA terminus and a 5'-phosphoryl group is left at the trailer molecule.. In terms of biological role, zinc phosphodiesterase, which displays some tRNA 3'-processing endonuclease activity. Probably involved in tRNA maturation, by removing a 3'-trailer from precursor tRNA. The protein is Putative ribonuclease Z (rnz) of Mycobacterium tuberculosis (strain CDC 1551 / Oshkosh).